The sequence spans 684 residues: Macrolide export ATP-binding/permease protein MacB (684 aa).

An ABC transporter domain is found at 2–243 (IQLYGLRKDY…RSRLANSRAE (242 aa)). 38–45 (GSSGSGKT) serves as a coordination point for ATP. The next 5 helical transmembrane spans lie at 248–268 (PASA…VLAL), 275–295 (TVLT…TMEL), 563–583 (LVIA…IMLV), 615–635 (VLCV…SVLV), and 644–664 (AMSI…GIVF).

Belongs to the ABC transporter superfamily. Macrolide exporter (TC 3.A.1.122) family. Homodimer.

Its subcellular location is the cell inner membrane. Functionally, non-canonical ABC transporter that contains transmembrane domains (TMD), which form a pore in the inner membrane, and an ATP-binding domain (NBD), which is responsible for energy generation. Confers resistance against macrolides. The protein is Macrolide export ATP-binding/permease protein MacB of Rhodopirellula baltica (strain DSM 10527 / NCIMB 13988 / SH1).